The chain runs to 20 residues: Probable cinnamyl alcohol dehydrogenase 1 (20 aa).

This sequence belongs to the zinc-containing alcohol dehydrogenase family. Zn(2+) serves as cofactor.

It carries out the reaction (E)-cinnamyl alcohol + NADP(+) = (E)-cinnamaldehyde + NADPH + H(+). It catalyses the reaction (E)-coniferol + NADP(+) = (E)-coniferaldehyde + NADPH + H(+). The catalysed reaction is (E)-sinapyl alcohol + NADP(+) = (E)-sinapaldehyde + NADPH + H(+). The enzyme catalyses (E)-4-coumaroyl alcohol + NADP(+) = (E)-4-coumaraldehyde + NADPH + H(+). It carries out the reaction (E)-caffeyl alcohol + NADP(+) = (E)-caffeyl aldehyde + NADPH + H(+). Its pathway is aromatic compound metabolism; phenylpropanoid biosynthesis. Functionally, involved in lignin biosynthesis. Catalyzes the final step specific for the production of lignin monomers, like coniferyl alcohol, sinapyl alcohol and 4-coumaryl alcohol. In Pseudotsuga menziesii (Douglas-fir), this protein is Probable cinnamyl alcohol dehydrogenase 1.